Consider the following 573-residue polypeptide: Transcription factor E3 (573 aa).

Ser47 carries the post-translational modification Phosphoserine; by MTOR. The segment at 91–151 (TLSASSSAEG…SPAPASPAIS (61 aa)) is disordered. Low complexity predominate over residues 107–126 (SSSSSSRVLLRQQLMRAQAQ). The segment covering 127–136 (EQERRERREQ) has biased composition (basic and acidic residues). The span at 137 to 151 (ASSFPSPAPASPAIS) shows a compositional bias: low complexity. An Asymmetric dimethylarginine modification is found at Arg186. Residues 209–248 (LASQALTPPPGGASVQPLPTPEAAHAPGPTSSAPNSPMAL) form a disordered region. Residues 258 to 269 (EIDDVIDEIISL) form a strong transcription activation domain region. Position 319 is a phosphoserine; by MTOR (Ser319). A Glycyl lysine isopeptide (Lys-Gly) (interchain with G-Cter in SUMO2) cross-link involves residue Lys337. The bHLH domain occupies 344–397 (QKKDNHNLIERRRRFNINDRIKELGTLIPKSSDPEMRWNKGTILKASVDYIRKL). Residues 354–357 (RRRR) carry the Nuclear localization signal motif. The tract at residues 407 to 428 (LESRQRSLEQANRSLQLRIQEL) is leucine-zipper. The segment at 531–573 (VGGLSGGTLSPLRAASDPLLSSVSPAVSKASSRRSSFSMEEES) is disordered. Low complexity predominate over residues 537-573 (GTLSPLRAASDPLLSSVSPAVSKASSRRSSFSMEEES). Residues Ser540, Ser546, Ser552, Ser554, Ser558, and Ser566 each carry the phosphoserine modification.

This sequence belongs to the MiT/TFE family. In terms of assembly, homodimer and heterodimer; with TFEB or MITF. Interacts with RRAGC/RagC GDP-bound and RRAGD/RagD GDP-bound; promoting its recruitment to lysosomal membrane in the presence of nutrients. Post-translationally, phosphorylation ar Ser-47 and Ser-319 by MTOR via non-canonical mTORC1 pathway regulates its stability and subcellular location, respectively. When nutrients are present, phosphorylation by MTOR at Ser-47 promotes ubiquitination by the SCF(BTRC) complex, followed by degradation. When nutrients are present, phosphorylation by MTOR at Ser-319 also promotes association with 14-3-3/YWHA adapters and retention in the cytosol. Phosphorylation at Ser-47 plays a more critical role than phosphorylation at Ser-319 for TFE3 inactivation. Inhibition of mTORC1, starvation and lysosomal disruption, promotes dephosphorylation and transcription factor activity. In terms of processing, ubiquitinated by the SCF(BTRC) and SCF(FBXW11) complexes following phosphorylation at Ser-47 by MTOR, leading to its degradation by the proteasome. Sumoylated; does not affect dimerization with MITF.

Its subcellular location is the cytoplasm. It is found in the cytosol. The protein resides in the nucleus. The protein localises to the lysosome membrane. Transcription factor that acts as a master regulator of lysosomal biogenesis and immune response. Specifically recognizes and binds E-box sequences (5'-CANNTG-3'); efficient DNA-binding requires dimerization with itself or with another MiT/TFE family member such as TFEB or MITF. Involved in the cellular response to amino acid availability by acting downstream of MTOR: in the presence of nutrients, TFE3 phosphorylation by MTOR promotes its inactivation. Upon starvation or lysosomal stress, inhibition of MTOR induces TFE3 dephosphorylation, resulting in transcription factor activity. Specifically recognizes and binds the CLEAR-box sequence (5'-GTCACGTGAC-3') present in the regulatory region of many lysosomal genes, leading to activate their expression, thereby playing a central role in expression of lysosomal genes. Maintains the pluripotent state of embryonic stem cells by promoting the expression of genes such as ESRRB; mTOR-dependent TFE3 cytosolic retention and inactivation promotes exit from pluripotency. Required to maintain the naive pluripotent state of hematopoietic stem cell; mTOR-dependent cytoplasmic retention of TFE3 promotes the exit of hematopoietic stem cell from pluripotency. TFE3 activity is also involved in the inhibition of neuronal progenitor differentiation. Acts as a positive regulator of browning of adipose tissue by promoting expression of target genes; mTOR-dependent phosphorylation promotes cytoplasmic retention of TFE3 and inhibits browning of adipose tissue. In association with TFEB, activates the expression of CD40L in T-cells, thereby playing a role in T-cell-dependent antibody responses in activated CD4(+) T-cells and thymus-dependent humoral immunity. Specifically recognizes the MUE3 box, a subset of E-boxes, present in the immunoglobulin enhancer. It also binds very well to a USF/MLTF site. May regulate lysosomal positioning in response to nutrient deprivation by promoting the expression of PIP4P1. The protein is Transcription factor E3 of Bos taurus (Bovine).